The sequence spans 237 residues: Ergosterol biosynthesis protein 29 (237 aa).

A helical transmembrane segment spans residues 36–56 (ITLFLIVVGTLAFFNELYITI).

Its subcellular location is the endoplasmic reticulum membrane. Part of the third module of ergosterol biosynthesis pathway that includes the late steps of the pathway. ERG29 regulates the activity of the iron-containing C4-methylsterol oxidase ERG25. The third module or late pathway involves the ergosterol synthesis itself through consecutive reactions that mainly occur in the endoplasmic reticulum (ER) membrane. Firstly, the squalene synthase ERG9 catalyzes the condensation of 2 farnesyl pyrophosphate moieties to form squalene, which is the precursor of all steroids. Squalene synthase is crucial for balancing the incorporation of farnesyl diphosphate (FPP) into sterol and nonsterol isoprene synthesis. Secondly, the squalene epoxidase ERG1 catalyzes the stereospecific oxidation of squalene to (S)-2,3-epoxysqualene, which is considered to be a rate-limiting enzyme in steroid biosynthesis. Then, the lanosterol synthase ERG7 catalyzes the cyclization of (S)-2,3 oxidosqualene to lanosterol, a reaction that forms the sterol core. In the next steps, lanosterol is transformed to zymosterol through a complex process involving various demethylation, reduction and desaturation reactions. The lanosterol 14-alpha-demethylase ERG11 (also known as CYP51) catalyzes C14-demethylation of lanosterol to produce 4,4'-dimethyl cholesta-8,14,24-triene-3-beta-ol, which is critical for ergosterol biosynthesis. The C-14 reductase ERG24 reduces the C14=C15 double bond of 4,4-dimethyl-cholesta-8,14,24-trienol to produce 4,4-dimethyl-cholesta-8,24-dienol. 4,4-dimethyl-cholesta-8,24-dienol is substrate of the C-4 demethylation complex ERG25-ERG26-ERG27 in which ERG25 catalyzes the three-step monooxygenation required for the demethylation of 4,4-dimethyl and 4alpha-methylsterols, ERG26 catalyzes the oxidative decarboxylation that results in a reduction of the 3-beta-hydroxy group at the C-3 carbon to an oxo group, and ERG27 is responsible for the reduction of the keto group on the C-3. ERG28 has a role as a scaffold to help anchor ERG25, ERG26 and ERG27 to the endoplasmic reticulum and ERG29 regulates the activity of the iron-containing C4-methylsterol oxidase ERG25. Then, the sterol 24-C-methyltransferase ERG6 catalyzes the methyl transfer from S-adenosyl-methionine to the C-24 of zymosterol to form fecosterol. The C-8 sterol isomerase ERG2 catalyzes the reaction which results in unsaturation at C-7 in the B ring of sterols and thus converts fecosterol to episterol. The sterol-C5-desaturase ERG3 then catalyzes the introduction of a C-5 double bond in the B ring to produce 5-dehydroepisterol. The C-22 sterol desaturase ERG5 further converts 5-dehydroepisterol into ergosta-5,7,22,24(28)-tetraen-3beta-ol by forming the C-22(23) double bond in the sterol side chain. Finally, ergosta-5,7,22,24(28)-tetraen-3beta-ol is substrate of the C-24(28) sterol reductase ERG4 to produce ergosterol. Its function is as follows. Plays a role in maintaining mitochondrial and plasma membrane integrity and consequently impacting the iron homeostasis, respiratory metabolism and antioxidant response. In Saccharomyces cerevisiae (strain ATCC 204508 / S288c) (Baker's yeast), this protein is Ergosterol biosynthesis protein 29.